The chain runs to 314 residues: Hydroxyethylthiazole kinase (314 aa).

Met70 provides a ligand contact to substrate. ATP is bound by residues Arg145 and Ser217. Gly244 serves as a coordination point for substrate.

It belongs to the Thz kinase family. It depends on Mg(2+) as a cofactor.

It carries out the reaction 5-(2-hydroxyethyl)-4-methylthiazole + ATP = 4-methyl-5-(2-phosphooxyethyl)-thiazole + ADP + H(+). It participates in cofactor biosynthesis; thiamine diphosphate biosynthesis; 4-methyl-5-(2-phosphoethyl)-thiazole from 5-(2-hydroxyethyl)-4-methylthiazole: step 1/1. Catalyzes the phosphorylation of the hydroxyl group of 4-methyl-5-beta-hydroxyethylthiazole (THZ). The chain is Hydroxyethylthiazole kinase from Bifidobacterium longum (strain NCC 2705).